Here is a 166-residue protein sequence, read N- to C-terminus: Urease accessory protein UreE (166 aa).

The tract at residues 135-156 is disordered; sequence EQGAYGGGHHHSHHGDEEFNYG.

The protein belongs to the UreE family.

Its subcellular location is the cytoplasm. Functionally, involved in urease metallocenter assembly. Binds nickel. Probably functions as a nickel donor during metallocenter assembly. This chain is Urease accessory protein UreE, found in Ectopseudomonas mendocina (strain ymp) (Pseudomonas mendocina).